Here is a 198-residue protein sequence, read N- to C-terminus: Recombination protein RecR (198 aa).

The C4-type zinc-finger motif lies at 59–74 (CSLCCNYTDHDPCPIC). Positions 82 to 175 (TLLCIVEQPR…KVTRIAHGLP (94 aa)) constitute a Toprim domain.

This sequence belongs to the RecR family.

Its function is as follows. May play a role in DNA repair. It seems to be involved in an RecBC-independent recombinational process of DNA repair. It may act with RecF and RecO. This Desulfitobacterium hafniense (strain Y51) protein is Recombination protein RecR.